The chain runs to 262 residues: Zinc import ATP-binding protein ZnuC (262 aa).

An ABC transporter domain is found at 4 to 220 (LNLSGVRLSH…PEYLALFGPR (217 aa)). 36-43 (GPNGAGKS) contributes to the ATP binding site. The interval 238 to 262 (ADGSVLPLAEGGGEPHTHGPGCRHG) is disordered.

This sequence belongs to the ABC transporter superfamily. Zinc importer (TC 3.A.1.15.5) family. The complex is composed of two ATP-binding proteins (ZnuC), two transmembrane proteins (ZnuB) and a solute-binding protein (ZnuA).

Its subcellular location is the cell inner membrane. The enzyme catalyses Zn(2+)(out) + ATP(in) + H2O(in) = Zn(2+)(in) + ADP(in) + phosphate(in) + H(+)(in). Functionally, part of the ABC transporter complex ZnuABC involved in zinc import. Responsible for energy coupling to the transport system. In Paramagnetospirillum magneticum (strain ATCC 700264 / AMB-1) (Magnetospirillum magneticum), this protein is Zinc import ATP-binding protein ZnuC.